The chain runs to 120 residues: Ribosome-binding factor A (120 aa).

The protein belongs to the RbfA family. Monomer. Binds 30S ribosomal subunits, but not 50S ribosomal subunits or 70S ribosomes.

The protein resides in the cytoplasm. Functionally, one of several proteins that assist in the late maturation steps of the functional core of the 30S ribosomal subunit. Associates with free 30S ribosomal subunits (but not with 30S subunits that are part of 70S ribosomes or polysomes). Required for efficient processing of 16S rRNA. May interact with the 5'-terminal helix region of 16S rRNA. The protein is Ribosome-binding factor A of Rickettsia rickettsii (strain Iowa).